Reading from the N-terminus, the 64-residue chain is Large ribosomal subunit protein uL29 (64 aa).

Belongs to the universal ribosomal protein uL29 family.

The chain is Large ribosomal subunit protein uL29 from Porphyromonas gingivalis (strain ATCC 33277 / DSM 20709 / CIP 103683 / JCM 12257 / NCTC 11834 / 2561).